Consider the following 116-residue polypeptide: HTH-type transcriptional regulator AnsR (116 aa).

In terms of domain architecture, HTH cro/C1-type spans 6–60 (LTELRKKKNWSLQYTADLLGIAKSTYAGYESGYRRPSLEALAMLADLFDTTCDEL). Positions 17–36 (LQYTADLLGIAKSTYAGYES) form a DNA-binding region, H-T-H motif.

Transcriptional repressor for the ans operon coding for L-asparaginase and L-aspartase. NH4(+) may influence this repression. In Bacillus subtilis (strain 168), this protein is HTH-type transcriptional regulator AnsR (ansR).